Here is a 470-residue protein sequence, read N- to C-terminus: 63 kDa sperm flagellar membrane protein (470 aa).

The signal sequence occupies residues 1–25 (MFCHLHCMLVVFSLLLTLTGSFVNA). Positions 41 to 80 (PPDPCASNPCTIASTHCVAAGESHTCECRPGYFETNGNCT) constitute an EGF-like 1 domain. 3 disulfide bridges follow: Cys45–Cys57, Cys50–Cys66, and Cys68–Cys79. Asn78, Asn170, and Asn219 each carry an N-linked (GlcNAc...) asparagine glycan. The SEA domain maps to 81–205 (VAQQFAGSFS…STITVSDFDE (125 aa)). The EGF-like 2; calcium-binding domain maps to 202–250 (DFDECASADDNDCDPNANCTNTAGSFTCECDTELYDNSPNTEEPGRVCI). 6 disulfide bridges follow: Cys206-Cys220, Cys214-Cys229, Cys231-Cys249, Cys253-Cys265, Cys258-Cys277, and Cys279-Cys291. Residues 249-292 (CIAPCDPGLCTRPNEICNNGGTIEDDNLCKCIEGYDYTQYGDCD) enclose the EGF-like 3 domain. N-linked (GlcNAc...) asparagine glycosylation is present at Asn322. A lipid anchor (GPI-anchor amidated glycine) is attached at Gly446. Positions 447-470 (SQRHLPVCGVLSLVVTTLLALMLH) are cleaved as a propeptide — removed in mature form.

Sperm.

It is found in the cell projection. The protein resides in the cilium. It localises to the flagellum membrane. This chain is 63 kDa sperm flagellar membrane protein, found in Strongylocentrotus purpuratus (Purple sea urchin).